We begin with the raw amino-acid sequence, 259 residues long: MKATVLAGLAAVIAAQGVAGHATFQQLWVDGEDKISACARLPLSNSPVTDVNSAEIACNANSGPAAEKCTVSAGGVVTVEMHQQPGDRSCDNEAIGGNHWGPVLVYMSKVDDSATADGSGGWFKIFEDTWAPAPNSNSGSDDYWGVKDLNAHCGRMDVPIPADLAPGDYLLRAEVIALHTASSPGGAQFYMTCYQLTVDGEGSQSPQTVSFPGAYSPSDPGIQINIYQKLTEYVSPGPAVIEGGTTVEAGTGGSTIPAN.

Residues 1 to 20 (MKATVLAGLAAVIAAQGVAG) form the signal peptide. Cu(2+)-binding residues include H21 and H99. C69 and C193 are oxidised to a cystine. The O2 site is built by H179 and Q188. Cu(2+) is bound at residue Y190.

The protein belongs to the polysaccharide monooxygenase AA9 family. Cu(2+) is required as a cofactor.

It is found in the secreted. The catalysed reaction is [(1-&gt;4)-beta-D-glucosyl]n+m + reduced acceptor + O2 = 4-dehydro-beta-D-glucosyl-[(1-&gt;4)-beta-D-glucosyl]n-1 + [(1-&gt;4)-beta-D-glucosyl]m + acceptor + H2O.. Lytic polysaccharide monooxygenase (LPMO) that depolymerizes crystalline and amorphous polysaccharides via the oxidation of scissile alpha- or beta-(1-4)-glycosidic bonds, yielding C1 or C4 oxidation products. Catalysis by LPMOs requires the reduction of the active-site copper from Cu(II) to Cu(I) by a reducing agent and H(2)O(2) or O(2) as a cosubstrate. The chain is AA9 family lytic polysaccharide monooxygenase E from Malbranchea cinnamomea (Thermophilic fungus).